The chain runs to 428 residues: CRS2-associated factor 1, mitochondrial (428 aa).

The N-terminal 21 residues, 1 to 21 (MLLLAGLLRRARPPRRPSVRR), are a transit peptide targeting the mitochondrion. Disordered regions lie at residues 33–100 (PPAS…REPK) and 129–152 (HADDPAPAAERELEEARRRERERV). 2 CRM domains span residues 155 to 253 (EPLT…KRPV) and 275 to 371 (EGLT…IQDN). Residues 378 to 428 (SVLEEESAGAESENGDQEQASSDWASDECSQLSSSDEMPDDKSAISEADSD) form a disordered region. A compositionally biased stretch (acidic residues) spans 380–393 (LEEESAGAESENGD). The segment covering 394–413 (QEQASSDWASDECSQLSSSD) has biased composition (polar residues).

Part of large ribonucleo-protein complexes that include group IIB introns.

It localises to the mitochondrion. In terms of biological role, may be involved in the splicing of group IIB introns in mitochondria. The chain is CRS2-associated factor 1, mitochondrial from Oryza sativa subsp. japonica (Rice).